We begin with the raw amino-acid sequence, 55 residues long: ATP synthase F(0) complex subunit 8 (55 aa).

Residues 9–29 (WFFIMIMSWAVFLLLIQPKLL) form a helical membrane-spanning segment.

This sequence belongs to the ATPase protein 8 family. Component of the ATP synthase complex composed at least of ATP5F1A/subunit alpha, ATP5F1B/subunit beta, ATP5MC1/subunit c (homooctomer), MT-ATP6/subunit a, MT-ATP8/subunit 8, ATP5ME/subunit e, ATP5MF/subunit f, ATP5MG/subunit g, ATP5MK/subunit k, ATP5MJ/subunit j, ATP5F1C/subunit gamma, ATP5F1D/subunit delta, ATP5F1E/subunit epsilon, ATP5PF/subunit F6, ATP5PB/subunit b, ATP5PD/subunit d, ATP5PO/subunit OSCP. ATP synthase complex consists of a soluble F(1) head domain (subunits alpha(3) and beta(3)) - the catalytic core - and a membrane F(0) domain - the membrane proton channel (subunits c, a, 8, e, f, g, k and j). These two domains are linked by a central stalk (subunits gamma, delta, and epsilon) rotating inside the F1 region and a stationary peripheral stalk (subunits F6, b, d, and OSCP).

The protein resides in the mitochondrion membrane. Functionally, subunit 8, of the mitochondrial membrane ATP synthase complex (F(1)F(0) ATP synthase or Complex V) that produces ATP from ADP in the presence of a proton gradient across the membrane which is generated by electron transport complexes of the respiratory chain. ATP synthase complex consist of a soluble F(1) head domain - the catalytic core - and a membrane F(1) domain - the membrane proton channel. These two domains are linked by a central stalk rotating inside the F(1) region and a stationary peripheral stalk. During catalysis, ATP synthesis in the catalytic domain of F(1) is coupled via a rotary mechanism of the central stalk subunits to proton translocation. In vivo, can only synthesize ATP although its ATP hydrolase activity can be activated artificially in vitro. Part of the complex F(0) domain. This chain is ATP synthase F(0) complex subunit 8, found in Rhea americana (Greater rhea).